A 206-amino-acid chain; its full sequence is tRNA(Phe) 7-((3-amino-3-carboxypropyl)-4-demethylwyosine(37)-N(4))-methyltransferase 2 (206 aa).

This sequence belongs to the TYW3 family.

It carries out the reaction 4-demethyl-7-[(3S)-3-amino-3-carboxypropyl]wyosine(37) in tRNA(Phe) + S-adenosyl-L-methionine = 7-[(3S)-3-amino-3-carboxypropyl]wyosine(37) in tRNA(Phe) + S-adenosyl-L-homocysteine + H(+). Its function is as follows. S-adenosyl-L-methionine-dependent methyltransferase that acts as a component of the wyosine derivatives biosynthesis pathway. Probably methylates N-4 position of wybutosine-86 to produce wybutosine-72. This Pyrococcus abyssi (strain GE5 / Orsay) protein is tRNA(Phe) 7-((3-amino-3-carboxypropyl)-4-demethylwyosine(37)-N(4))-methyltransferase 2.